Here is a 60-residue protein sequence, read N- to C-terminus: Conotoxin PnMRCL-022 (60 aa).

The N-terminal stretch at 1-22 (MRCLPVFVILLLLIASTPSVNA) is a signal peptide. Residues 23–45 (RPKTKDLASFHDNAKRTQHIFWS) constitute a propeptide that is removed on maturation.

Belongs to the conotoxin T superfamily. In terms of processing, contains 2 disulfide bonds that can be either 'C1-C3, C2-C4' or 'C1-C4, C2-C3', since these disulfide connectivities have been observed for conotoxins with cysteine framework V (for examples, see AC P0DQQ7 and AC P81755). In terms of tissue distribution, expressed by the venom duct.

Its subcellular location is the secreted. This chain is Conotoxin PnMRCL-022, found in Conus pennaceus (Feathered cone).